The chain runs to 483 residues: Cobyric acid synthase (483 aa).

One can recognise a GATase cobBQ-type domain in the interval 251–438; that stretch reads ALIVAVPMLP…LHGVFSADRF (188 aa). C333 acts as the Nucleophile in catalysis. The active site involves H430.

This sequence belongs to the CobB/CobQ family. CobQ subfamily.

Its pathway is cofactor biosynthesis; adenosylcobalamin biosynthesis. In terms of biological role, catalyzes amidations at positions B, D, E, and G on adenosylcobyrinic A,C-diamide. NH(2) groups are provided by glutamine, and one molecule of ATP is hydrogenolyzed for each amidation. The polypeptide is Cobyric acid synthase (Brucella melitensis biotype 2 (strain ATCC 23457)).